The sequence spans 234 residues: Small ribosomal subunit protein uS10m (234 aa).

A mitochondrion-targeting transit peptide spans 1 to 23 (MLRIGYRGFSTRSRVFKLSPQEY).

Belongs to the universal ribosomal protein uS10 family. As to quaternary structure, component of the mitochondrial small ribosomal subunit (mt-SSU).

It localises to the mitochondrion. Component of the mitochondrial ribosome (mitoribosome), a dedicated translation machinery responsible for the synthesis of mitochondrial genome-encoded proteins, including at least some of the essential transmembrane subunits of the mitochondrial respiratory chain. The mitoribosomes are attached to the mitochondrial inner membrane and translation products are cotranslationally integrated into the membrane. This chain is Small ribosomal subunit protein uS10m (RSM10), found in Candida albicans (strain SC5314 / ATCC MYA-2876) (Yeast).